The primary structure comprises 311 residues: Pyrimidine-specific ribonucleoside hydrolase RihA (311 aa).

His-240 is a catalytic residue.

The protein belongs to the IUNH family. RihA subfamily.

Functionally, hydrolyzes with equal efficiency cytidine or uridine to ribose and cytosine or uracil, respectively. This is Pyrimidine-specific ribonucleoside hydrolase RihA from Escherichia coli (strain K12 / MC4100 / BW2952).